We begin with the raw amino-acid sequence, 37 residues long: Large ribosomal subunit protein bL36 (37 aa).

It belongs to the bacterial ribosomal protein bL36 family.

The chain is Large ribosomal subunit protein bL36 from Gloeothece citriformis (strain PCC 7424) (Cyanothece sp. (strain PCC 7424)).